A 291-amino-acid polypeptide reads, in one-letter code: Ribonuclease Z (291 aa).

Zn(2+) contacts are provided by His-61, His-63, Asp-65, His-66, His-133, Asp-201, and His-257. Residue Asp-65 is the Proton acceptor of the active site.

Belongs to the RNase Z family. In terms of assembly, homodimer. It depends on Zn(2+) as a cofactor.

The catalysed reaction is Endonucleolytic cleavage of RNA, removing extra 3' nucleotides from tRNA precursor, generating 3' termini of tRNAs. A 3'-hydroxy group is left at the tRNA terminus and a 5'-phosphoryl group is left at the trailer molecule.. In terms of biological role, zinc phosphodiesterase, which displays some tRNA 3'-processing endonuclease activity. Probably involved in tRNA maturation, by removing a 3'-trailer from precursor tRNA. This is Ribonuclease Z from Saccharolobus islandicus (strain Y.N.15.51 / Yellowstone #2) (Sulfolobus islandicus).